We begin with the raw amino-acid sequence, 759 residues long: MTEQITPEIVAQHGLKPDEYQRILEHLGRVPTLTELGVFSVMWSEHCSYKSSRVHLKTFPTSGPRVLQGPGENAGVVDLGDGLAAAFKMESHNHPSYIEPYQGAATGVGGILRDVFTMGARPIASLNALRFGDPSHPRTAYLLEGVVAGIGGYGNCMGVPTVGGEVAFHPSYNGNCLVNAFTLGILPADKIFRGTAAGVGNPVMYVGAKTGRDGIHGATMASAEFDASTEEKRPTVQVGDPFMEKLLLEACLELFQTDAVVGIQDMGAAGLTSSSVEMAGRGGNGLDLFLDKVPLREEGMTPYEILLSESQERMLLVAAEGKEELVRSICEKWDLDVAVIGRVTASGRWRAHWRGEVVADLPVDPLTEGAPKYHRPMTPHPALPALHAFDPATLPEPSDLGAALLRLLARPTIASKEWVYRQYDHMVRLVGAVRPGGDAAVVRLAVSHEKHAHKGIALSVGVNGRFCFLDPYLGAMHAVAECARNIACVGGEPIAITDCLNFGNPEKPEIMWQFAECVRGIGDACRAFGTPVVSGNVSLYNETEGQGILPTPTVGMVGLVEPVERTCHSTFRAAGDVVALVGSLQGEVGGSEYLSAEHGKEAGRPPALDLAREKAVQETVRRAVRAGLLSSAHDCSEGGLAVALAESCMMHEVPADGSTPAWIGCAVRIPFPVRKDFVLFGEDASRILVSLPKENAARFVELAQECGAPVIRLGAVGGDRLEIQGALSVPVEELARAWRDGIPAVLRRDAAHAGAAAPA.

His-46 is a catalytic residue. ATP is bound by residues Tyr-49 and Lys-88. Residue Glu-90 participates in Mg(2+) binding. Substrate contacts are provided by residues 91 to 94 and Arg-113; that span reads SHNH. His-92 functions as the Proton acceptor in the catalytic mechanism. A Mg(2+)-binding site is contributed by Asp-114. Gln-237 serves as a coordination point for substrate. Mg(2+) is bound at residue Asp-265. 309 to 311 serves as a coordination point for substrate; that stretch reads ESQ. ATP is bound by residues Asp-498 and Gly-535. Asn-536 contributes to the Mg(2+) binding site. Ser-538 contacts substrate.

This sequence belongs to the FGAMS family. Monomer. Part of the FGAM synthase complex composed of 1 PurL, 1 PurQ and 2 PurS subunits.

The protein localises to the cytoplasm. It catalyses the reaction N(2)-formyl-N(1)-(5-phospho-beta-D-ribosyl)glycinamide + L-glutamine + ATP + H2O = 2-formamido-N(1)-(5-O-phospho-beta-D-ribosyl)acetamidine + L-glutamate + ADP + phosphate + H(+). Its pathway is purine metabolism; IMP biosynthesis via de novo pathway; 5-amino-1-(5-phospho-D-ribosyl)imidazole from N(2)-formyl-N(1)-(5-phospho-D-ribosyl)glycinamide: step 1/2. Part of the phosphoribosylformylglycinamidine synthase complex involved in the purines biosynthetic pathway. Catalyzes the ATP-dependent conversion of formylglycinamide ribonucleotide (FGAR) and glutamine to yield formylglycinamidine ribonucleotide (FGAM) and glutamate. The FGAM synthase complex is composed of three subunits. PurQ produces an ammonia molecule by converting glutamine to glutamate. PurL transfers the ammonia molecule to FGAR to form FGAM in an ATP-dependent manner. PurS interacts with PurQ and PurL and is thought to assist in the transfer of the ammonia molecule from PurQ to PurL. This Anaeromyxobacter dehalogenans (strain 2CP-C) protein is Phosphoribosylformylglycinamidine synthase subunit PurL.